A 252-amino-acid chain; its full sequence is Phosphoribosylaminoimidazole-succinocarboxamide synthase 1 (252 aa).

The protein belongs to the SAICAR synthetase family.

It catalyses the reaction 5-amino-1-(5-phospho-D-ribosyl)imidazole-4-carboxylate + L-aspartate + ATP = (2S)-2-[5-amino-1-(5-phospho-beta-D-ribosyl)imidazole-4-carboxamido]succinate + ADP + phosphate + 2 H(+). It participates in purine metabolism; IMP biosynthesis via de novo pathway; 5-amino-1-(5-phospho-D-ribosyl)imidazole-4-carboxamide from 5-amino-1-(5-phospho-D-ribosyl)imidazole-4-carboxylate: step 1/2. This Caulobacter vibrioides (strain ATCC 19089 / CIP 103742 / CB 15) (Caulobacter crescentus) protein is Phosphoribosylaminoimidazole-succinocarboxamide synthase 1 (purC1).